Consider the following 256-residue polypeptide: MKRLNKLVLGIIFLFLVISITAGCGIGKEAKIKKSFEKTLSMYPIKNLEDLYEKRRLFVMTKFDKNDKGTWIIGSEMATQNKGEALKVKGMVLYMNRNTKTTKGYYYVNAIKNDKDGRPQENEKRYPVKMVDNKIIPTKEIKDKNIKKEIENFKFFVQYGNFKDLSKYKDGDISYNPEVPSYSAKYQLTNDDYNVKQLRKRYDIPTNKAPKLLLKGTGNLKGSSVGYKDIEFTFVEKKEENIYFSDGLIFKPSEDK.

A signal peptide spans 1–23; sequence MKRLNKLVLGIIFLFLVISITAG. C24 carries N-palmitoyl cysteine lipidation. C24 carries the S-diacylglycerol cysteine lipid modification.

The protein belongs to the staphylococcal tandem lipoprotein family.

The protein resides in the cell membrane. This is an uncharacterized protein from Staphylococcus aureus (strain COL).